A 352-amino-acid chain; its full sequence is Putative histone-lysine N-methyltransferase ASHH4 (352 aa).

An AWS domain is found at 60–109; sequence DHGIFCSCSLDPGSSTLCGSDCNCGILLSSCSSSCKCSSECTNKPFQQRH. In terms of domain architecture, SET spans 111–228; sequence KKMKLVQTEK…KGEQLTYDYQ (118 aa). A Post-SET domain is found at 234–250; sequence ADQDCYCGAVCCRKKLG.

The protein belongs to the class V-like SAM-binding methyltransferase superfamily. Histone-lysine methyltransferase family. SET2 subfamily.

Its subcellular location is the nucleus. The protein resides in the chromosome. It localises to the centromere. It catalyses the reaction L-lysyl-[histone] + S-adenosyl-L-methionine = N(6)-methyl-L-lysyl-[histone] + S-adenosyl-L-homocysteine + H(+). Its function is as follows. Histone methyltransferase. The sequence is that of Putative histone-lysine N-methyltransferase ASHH4 (ASHH4) from Arabidopsis thaliana (Mouse-ear cress).